The sequence spans 353 residues: Phospho-N-acetylmuramoyl-pentapeptide-transferase (353 aa).

10 helical membrane-spanning segments follow: residues 24–44, 66–86, 88–108, 129–149, 160–180, 192–212, 229–249, 256–276, 281–301, and 330–350; these read LGFF…ILWA, TPTM…VLCA, LGNL…FVGF, FGML…KGLD, PLFE…FLST, GLAS…VYVA, VGEL…FLWY, VFMG…NAIV, ILLV…ILQV, and KVIV…LLSL.

This sequence belongs to the glycosyltransferase 4 family. MraY subfamily. Mg(2+) serves as cofactor.

It is found in the cell inner membrane. It carries out the reaction UDP-N-acetyl-alpha-D-muramoyl-L-alanyl-gamma-D-glutamyl-meso-2,6-diaminopimeloyl-D-alanyl-D-alanine + di-trans,octa-cis-undecaprenyl phosphate = di-trans,octa-cis-undecaprenyl diphospho-N-acetyl-alpha-D-muramoyl-L-alanyl-D-glutamyl-meso-2,6-diaminopimeloyl-D-alanyl-D-alanine + UMP. It functions in the pathway cell wall biogenesis; peptidoglycan biosynthesis. Its function is as follows. Catalyzes the initial step of the lipid cycle reactions in the biosynthesis of the cell wall peptidoglycan: transfers peptidoglycan precursor phospho-MurNAc-pentapeptide from UDP-MurNAc-pentapeptide onto the lipid carrier undecaprenyl phosphate, yielding undecaprenyl-pyrophosphoryl-MurNAc-pentapeptide, known as lipid I. The polypeptide is Phospho-N-acetylmuramoyl-pentapeptide-transferase (Helicobacter pylori (strain HPAG1)).